The sequence spans 166 residues: Large ribosomal subunit protein uL10 (166 aa).

The protein belongs to the universal ribosomal protein uL10 family. As to quaternary structure, part of the ribosomal stalk of the 50S ribosomal subunit. The N-terminus interacts with L11 and the large rRNA to form the base of the stalk. The C-terminus forms an elongated spine to which L12 dimers bind in a sequential fashion forming a multimeric L10(L12)X complex.

In terms of biological role, forms part of the ribosomal stalk, playing a central role in the interaction of the ribosome with GTP-bound translation factors. The sequence is that of Large ribosomal subunit protein uL10 from Bacillus licheniformis (strain ATCC 14580 / DSM 13 / JCM 2505 / CCUG 7422 / NBRC 12200 / NCIMB 9375 / NCTC 10341 / NRRL NRS-1264 / Gibson 46).